A 192-amino-acid polypeptide reads, in one-letter code: Ion-translocating oxidoreductase complex subunit B (192 aa).

Positions 1–26 (MNAIWIAVVAVSLLGLAFGAILGYAS) are hydrophobic. The 60-residue stretch at 32–91 (EDDPVVEKIDEILPQSQCGQCGYPGCRPYAEAIGSQGEKINRCAPGGEAVMLKIATLLNV) folds into the 4Fe-4S domain. The [4Fe-4S] cluster site is built by C49, C52, C57, C74, C117, C120, C123, C127, C147, C150, C153, and C157. 2 4Fe-4S ferredoxin-type domains span residues 108 to 137 (MLAV…GATR) and 138 to 167 (AMHT…LRPV).

It belongs to the 4Fe4S bacterial-type ferredoxin family. RnfB subfamily. As to quaternary structure, the complex is composed of six subunits: RnfA, RnfB, RnfC, RnfD, RnfE and RnfG. It depends on [4Fe-4S] cluster as a cofactor.

The protein localises to the cell inner membrane. Functionally, part of a membrane-bound complex that couples electron transfer with translocation of ions across the membrane. The protein is Ion-translocating oxidoreductase complex subunit B of Citrobacter koseri (strain ATCC BAA-895 / CDC 4225-83 / SGSC4696).